Reading from the N-terminus, the 730-residue chain is Ribosomal RNA large subunit methyltransferase K/L (730 aa).

Residues 46-157 form the THUMP domain; it reads TAYRLCLWSR…RGEAILSLDL (112 aa). Positions 399-408 are enriched in basic and acidic residues; sequence AAVEEGEPRR. The tract at residues 399-418 is disordered; sequence AAVEEGEPRRQAPVASEPAR.

It belongs to the methyltransferase superfamily. RlmKL family.

Its subcellular location is the cytoplasm. It catalyses the reaction guanosine(2445) in 23S rRNA + S-adenosyl-L-methionine = N(2)-methylguanosine(2445) in 23S rRNA + S-adenosyl-L-homocysteine + H(+). The catalysed reaction is guanosine(2069) in 23S rRNA + S-adenosyl-L-methionine = N(2)-methylguanosine(2069) in 23S rRNA + S-adenosyl-L-homocysteine + H(+). Functionally, specifically methylates the guanine in position 2445 (m2G2445) and the guanine in position 2069 (m7G2069) of 23S rRNA. The protein is Ribosomal RNA large subunit methyltransferase K/L of Pseudomonas entomophila (strain L48).